Here is a 378-residue protein sequence, read N- to C-terminus: Probable S-(hydroxymethyl)glutathione dehydrogenase 1 (378 aa).

Zn(2+) is bound at residue C47. Residue H48 coordinates NAD(+). Zn(2+) contacts are provided by H69, E70, C99, C102, C105, C113, and C176. NAD(+)-binding positions include 201–206, D225, 293–295, and 318–320; these read GCGCVG, IGV, and SAF.

Belongs to the zinc-containing alcohol dehydrogenase family. Class-III subfamily. Zn(2+) serves as cofactor.

The enzyme catalyses a primary alcohol + NAD(+) = an aldehyde + NADH + H(+). The catalysed reaction is a secondary alcohol + NAD(+) = a ketone + NADH + H(+). It catalyses the reaction S-(hydroxymethyl)glutathione + NADP(+) = S-formylglutathione + NADPH + H(+). It carries out the reaction S-(hydroxymethyl)glutathione + NAD(+) = S-formylglutathione + NADH + H(+). The enzyme catalyses S-nitrosoglutathione + NADH + H(+) = S-(hydroxysulfenamide)glutathione + NAD(+). Functionally, oxidizes long-chain alcohols and, in the presence of glutathione, is able to oxidize formaldehyde. Also acts as a S-nitroso-glutathione reductase by catalyzing the NADH-dependent reduction of S-nitrosoglutathione, thereby regulating protein S-nitrosylation. The chain is Probable S-(hydroxymethyl)glutathione dehydrogenase 1 from Schizosaccharomyces pombe (strain 972 / ATCC 24843) (Fission yeast).